We begin with the raw amino-acid sequence, 494 residues long: Ketol-acid reductoisomerase (NADP(+)) (494 aa).

One can recognise a KARI N-terminal Rossmann domain in the interval 14–208 (LDQLGRCRFM…GGHRAGCLES (195 aa)). NADP(+) is bound by residues 45 to 48 (CGAQ), arginine 68, arginine 76, serine 78, and 108 to 110 (DKQ). The active site involves histidine 132. Glycine 158 contacts NADP(+). KARI C-terminal knotted domains lie at 209–344 (SFVA…NYPD) and 345–487 (SSLE…MTDM). Positions 217, 221, 389, and 393 each coordinate Mg(2+). Serine 414 contributes to the substrate binding site.

The protein belongs to the ketol-acid reductoisomerase family. Requires Mg(2+) as cofactor.

The enzyme catalyses (2R)-2,3-dihydroxy-3-methylbutanoate + NADP(+) = (2S)-2-acetolactate + NADPH + H(+). It carries out the reaction (2R,3R)-2,3-dihydroxy-3-methylpentanoate + NADP(+) = (S)-2-ethyl-2-hydroxy-3-oxobutanoate + NADPH + H(+). It participates in amino-acid biosynthesis; L-isoleucine biosynthesis; L-isoleucine from 2-oxobutanoate: step 2/4. The protein operates within amino-acid biosynthesis; L-valine biosynthesis; L-valine from pyruvate: step 2/4. Functionally, involved in the biosynthesis of branched-chain amino acids (BCAA). Catalyzes an alkyl-migration followed by a ketol-acid reduction of (S)-2-acetolactate (S2AL) to yield (R)-2,3-dihydroxy-isovalerate. In the isomerase reaction, S2AL is rearranged via a Mg-dependent methyl migration to produce 3-hydroxy-3-methyl-2-ketobutyrate (HMKB). In the reductase reaction, this 2-ketoacid undergoes a metal-dependent reduction by NADPH to yield (R)-2,3-dihydroxy-isovalerate. In Aliivibrio salmonicida (strain LFI1238) (Vibrio salmonicida (strain LFI1238)), this protein is Ketol-acid reductoisomerase (NADP(+)).